The following is an 87-amino-acid chain: Large ribosomal subunit protein bL27 (87 aa).

Residues 1–20 are disordered; that stretch reads MARKRGGSGSKNGRDSNPKY.

Belongs to the bacterial ribosomal protein bL27 family.

The sequence is that of Large ribosomal subunit protein bL27 (rpmA) from Treponema pallidum (strain Nichols).